The primary structure comprises 528 residues: Probable rhamnogalacturonate lyase A (528 aa).

The N-terminal stretch at Met1–Ala20 is a signal peptide. Asn46 is a glycosylation site (N-linked (GlcNAc...) asparagine). 2 disulfide bridges follow: Cys50-Cys93 and Cys184-Cys193. Asn351 is a glycosylation site (N-linked (GlcNAc...) asparagine).

Belongs to the polysaccharide lyase 4 family.

The protein localises to the secreted. It carries out the reaction Endotype eliminative cleavage of L-alpha-rhamnopyranosyl-(1-&gt;4)-alpha-D-galactopyranosyluronic acid bonds of rhamnogalacturonan I domains in ramified hairy regions of pectin leaving L-rhamnopyranose at the reducing end and 4-deoxy-4,5-unsaturated D-galactopyranosyluronic acid at the non-reducing end.. Functionally, pectinolytic enzymes consist of four classes of enzymes: pectin lyase, polygalacturonase, pectin methylesterase and rhamnogalacturonase. Degrades the rhamnogalacturonan I (RG-I) backbone of pectin. The protein is Probable rhamnogalacturonate lyase A (rglA) of Neosartorya fischeri (strain ATCC 1020 / DSM 3700 / CBS 544.65 / FGSC A1164 / JCM 1740 / NRRL 181 / WB 181) (Aspergillus fischerianus).